The sequence spans 455 residues: tRNA modification GTPase MnmE (455 aa).

(6S)-5-formyl-5,6,7,8-tetrahydrofolate contacts are provided by R24, E81, and K120. The TrmE-type G domain maps to 216 to 378 (GMTVVIAGRP…LREHLKHCMG (163 aa)). N226 serves as a coordination point for K(+). Residues 226 to 231 (NAGKSS), 245 to 251 (TDIAGTT), 270 to 273 (DTAG), and 335 to 338 (NKAD) contribute to the GTP site. S230 contacts Mg(2+). Residues T245, I247, and T250 each coordinate K(+). T251 is a Mg(2+) binding site. K455 is a (6S)-5-formyl-5,6,7,8-tetrahydrofolate binding site.

This sequence belongs to the TRAFAC class TrmE-Era-EngA-EngB-Septin-like GTPase superfamily. TrmE GTPase family. In terms of assembly, homodimer. Heterotetramer of two MnmE and two MnmG subunits. Requires K(+) as cofactor.

It localises to the cytoplasm. Its function is as follows. Exhibits a very high intrinsic GTPase hydrolysis rate. Involved in the addition of a carboxymethylaminomethyl (cmnm) group at the wobble position (U34) of certain tRNAs, forming tRNA-cmnm(5)s(2)U34. The polypeptide is tRNA modification GTPase MnmE (Stutzerimonas stutzeri (strain A1501) (Pseudomonas stutzeri)).